A 196-amino-acid polypeptide reads, in one-letter code: APGW-amide-related neuropeptide (196 aa).

An N-terminal signal peptide occupies residues 1–22; sequence METLNIFLVIFSLLGTIIIASS. Residues 23–48 constitute a propeptide that is removed on maturation; the sequence is SDESSERKKRDLDTIDDTNNDFLTAD. Trp-54 is modified (tryptophan amide). The propeptide occupies 58-68; sequence SFDDDILNNLD. The residue at position 74 (Trp-74) is a Tryptophan amide. Residues 78 to 88 constitute a propeptide that is removed on maturation; the sequence is SDMLFDSEEIE. Trp-94 bears the Tryptophan amide mark. A propeptide spanning residues 98-105 is cleaved from the precursor; that stretch reads SSSLYDDE. Residue Trp-111 is modified to Tryptophan amide. Positions 115-129 are excised as a propeptide; the sequence is SSALLDDLSLYNSIV. Trp-135 carries the tryptophan amide modification. A propeptide spanning residues 139 to 146 is cleaved from the precursor; sequence SDTFKVDI. Residues Trp-151 and Trp-158 each carry the tryptophan amide modification. Residues 162–196 constitute a propeptide that is removed on maturation; sequence SGPNMCMDFQDEILQLYKLLNEAEKLHSECEALNI.

Expressed in cerebral, pedal and visceral ganglia. TPGW-amide is found in pedal and cerebral ganglia and in shell adductor muscle (at protein level). RPGW-amide and KPGW-amide are found in pedal retractor muscle, ABRM and shell adductor muscle (at protein level).

RPGW-amide, KPGW-amide and TPGW-amide tetrapeptides are involved in control of muscle contraction and may function as neurotransmitters. These peptides increase tension of the pedal retractor muscle and, in conjunction with FMRF-amide, increase peak tension of the anterior byssus retractor muscle (ABRM). The sequence is that of APGW-amide-related neuropeptide from Mytilus edulis (Blue mussel).